Here is a 441-residue protein sequence, read N- to C-terminus: Ribulose bisphosphate carboxylase large chain (441 aa).

N89 and T139 together coordinate substrate. The active-site Proton acceptor is K141. K143 is a binding site for substrate. Mg(2+)-binding residues include K167, D169, and E170. K167 bears the N6-carboxylysine mark. The active-site Proton acceptor is the H260. 3 residues coordinate substrate: R261, H293, and S345.

The protein belongs to the RuBisCO large chain family. Type I subfamily. In terms of assembly, heterohexadecamer of 8 large chains and 8 small chains; disulfide-linked. The disulfide link is formed within the large subunit homodimers. Mg(2+) is required as a cofactor. The disulfide bond which can form in the large chain dimeric partners within the hexadecamer appears to be associated with oxidative stress and protein turnover.

Its subcellular location is the plastid. The protein resides in the chloroplast. The catalysed reaction is 2 (2R)-3-phosphoglycerate + 2 H(+) = D-ribulose 1,5-bisphosphate + CO2 + H2O. It catalyses the reaction D-ribulose 1,5-bisphosphate + O2 = 2-phosphoglycolate + (2R)-3-phosphoglycerate + 2 H(+). Functionally, ruBisCO catalyzes two reactions: the carboxylation of D-ribulose 1,5-bisphosphate, the primary event in carbon dioxide fixation, as well as the oxidative fragmentation of the pentose substrate in the photorespiration process. Both reactions occur simultaneously and in competition at the same active site. This is Ribulose bisphosphate carboxylase large chain from Polemonium reptans (Greek valerian).